The sequence spans 440 residues: Gap junction alpha-8 protein (440 aa).

An intramembrane segment occupies 2–12 (GDWSFLGNILE). The Cytoplasmic portion of the chain corresponds to 13 to 21 (EVNEHSTVI). The chain crosses the membrane as a helical span at residues 22 to 42 (GRVWLTVLFIFRILILGTAAE). The Extracellular segment spans residues 43 to 71 (FVWGDEQSDFVCNTQQPGCENVCYDEAFP). 3 cysteine pairs are disulfide-bonded: C54–C201, C61–C195, and C65–C190. The helical transmembrane segment at 72 to 92 (ISHIRLWVLQIIFVSTPSLMY) threads the bilayer. Residues 93 to 161 (VGHAVHHVRM…GTLLRTYVCH (69 aa)) lie on the Cytoplasmic side of the membrane. Residues 111-143 (AEELCQQSRSNGGERVPIAPDQASIRKSSSSSK) are disordered. Residues 162 to 182 (IIFKTLFEVGFIVGHYFLYGF) traverse the membrane as a helical segment. Residues 183–210 (RILPLYRCSRWPCPNVVDCFVSRPTEKT) lie on the Extracellular side of the membrane. Residues 211–231 (IFILFMLSVAFVSLFLNIMEM) traverse the membrane as a helical segment. Over 232-440 (SHLGMKGIRS…SRARSDDLTI (209 aa)) the chain is Cytoplasmic. Residues 334–440 (GAQEVEREEQ…SRARSDDLTI (107 aa)) form a disordered region. 2 stretches are compositionally biased toward basic and acidic residues: residues 353 to 364 (VGEKKQEAEKVA) and 375 to 399 (DGEKVETPGVGKDDEKEELQAEKVT). Residues 423–432 (LSRLSKASSR) are compositionally biased toward low complexity.

Belongs to the connexin family. Alpha-type (group II) subfamily. In terms of assembly, a hemichannel or connexon is composed of a hexamer of connexins. A functional gap junction is formed by the apposition of two hemichannels. Forms heteromeric channels with GJA3. As to expression, detected in eye lens (at protein level).

The protein localises to the cell membrane. It localises to the cell junction. It is found in the gap junction. Structural component of eye lens gap junctions. Gap junctions are dodecameric channels that connect the cytoplasm of adjoining cells. They are formed by the docking of two hexameric hemichannels, one from each cell membrane. Small molecules and ions diffuse from one cell to a neighboring cell via the central pore. This is Gap junction alpha-8 protein (Gja8) from Rattus norvegicus (Rat).